A 53-amino-acid polypeptide reads, in one-letter code: UPF0391 membrane protein Ent638_0536 (53 aa).

Transmembrane regions (helical) follow at residues 4–24 (WGII…GGLA) and 27–47 (AAWA…VSLF).

It belongs to the UPF0391 family.

The protein resides in the cell membrane. In Enterobacter sp. (strain 638), this protein is UPF0391 membrane protein Ent638_0536.